The following is a 207-amino-acid chain: MQSYQQPLRVGVGGPVGSGKTALLEALCKAMRDHYQIAVVTNDIYTKEDQRILTEAGALEPERIVGVETGGCPHTAIREDASMNLAAVEALARKFGNLEVIFVESGGDNLSATFSPELADLTIYVIDVAEGEKIPRKGGPGITKSDFLVINKTDLAPYVGASLEVMERDTQRMRPQRPWTFSNLKKGEGLQAVIDFIVERGMLGVRG.

A GTP-binding site is contributed by 14–21; that stretch reads GPVGSGKT.

It belongs to the SIMIBI class G3E GTPase family. UreG subfamily. As to quaternary structure, homodimer. UreD, UreF and UreG form a complex that acts as a GTP-hydrolysis-dependent molecular chaperone, activating the urease apoprotein by helping to assemble the nickel containing metallocenter of UreC. The UreE protein probably delivers the nickel.

The protein resides in the cytoplasm. Its function is as follows. Facilitates the functional incorporation of the urease nickel metallocenter. This process requires GTP hydrolysis, probably effectuated by UreG. This Pseudomonas putida (strain GB-1) protein is Urease accessory protein UreG.